A 723-amino-acid chain; its full sequence is Hypoxia-inducible factor prolyl hydroxylase (723 aa).

Zn(2+) is bound by residues C39, C42, C54, C57, C63, H67, H75, and C79. Residues 39–79 (CTYCGSSCTSSQLQTCLFCGTVAYCSKEHQQLDWLTHKMIC) form an MYND-type; atypical zinc finger. Low complexity predominate over residues 249–270 (PSTASTATIPPPATTTSSATSS). 2 disordered regions span residues 249-275 (PSTA…KSET) and 294-323 (IETE…KINY). A Fe2OG dioxygenase domain is found at 468–566 (GRSRAMLAIY…RFAITIWYMD (99 aa)). Positions 487, 489, and 548 each coordinate Fe cation. Position 557 (R557) interacts with 2-oxoglutarate. The segment at 678-723 (RTTSLQSISDHFRSERSHERRSSTSSDQDLDEGLPPPPSTNPEYYI) is disordered. Residues 687-699 (DHFRSERSHERRS) are compositionally biased toward basic and acidic residues.

Interacts (via catalytic domain) with lin-10 (via N-terminus); the interaction regulates lin-10 subcellular localization; the interaction is direct. Interacts (via catalytic domain) with swan-1 (via WD 1-3 repeats); the interaction may regulate vhl-1-independent hif-1 transcriptional activity; the interaction is direct. Interacts (via C-terminus) with cysl-1; the interaction is enhanced by hydrogen disulfide and activates hif-1-mediated transcription; the interaction is direct. It depends on Fe(2+) as a cofactor. The cofactor is L-ascorbate. In larvae and adults, expressed in pharyngeal and body wall muscles.

The protein resides in the cytoplasm. Its subcellular location is the nucleus. The protein localises to the cell projection. It localises to the dendrite. It is found in the axon. It catalyses the reaction L-prolyl-[hypoxia-inducible factor alpha subunit] + 2-oxoglutarate + O2 = trans-4-hydroxy-L-prolyl-[hypoxia-inducible factor alpha subunit] + succinate + CO2. With respect to regulation, inhibited by Co(2+) and dimethyloxalylglycine. Inhibited by the iron chelator 2, 2'-dipyridyl. Its function is as follows. Cellular oxygen sensor which regulates the stability and the activity of hypoxia-inducible transcription factor, hif-1. In normoxic conditions, hydroxylates hif-1 targeting it for vhl-1-mediated proteasomal degradation. In addition, regulates hif-1 transcriptional activity in a vhl-1-independent manner and independently of its hydroxylase activity. By regulating hif-1 activity, controls several cellular responses. Mediates susceptibility to B.thuringiensis and V.cholerae pore-forming toxins and enteropathogenic E.coli. Mediates susceptibility to P.aeruginosa PAO1-mediated killing by regulating resistance to cyanide produced by P.aeruginosa. Mediates resistance to S.aureus-mediated killing. In addition, plays a role in heat acclimation, neuronal development, behavioral responses to reoxygenation and hydrogen sulfide, iron homeostasis and aging. In neurons, involved in mitochondrion fusion during reoxygenation. Involved in egg laying. Regulates the trafficking of the glutamate receptor glr-1, probably independently of hif-1, by regulating lin-10 subcellular localization in response to oxygen levels. May hydroxylate lin-10. The protein is Hypoxia-inducible factor prolyl hydroxylase of Caenorhabditis elegans.